Consider the following 422-residue polypeptide: 5'-deoxyadenosine deaminase (422 aa).

Zn(2+) contacts are provided by histidine 57 and histidine 59. Residues glutamate 86 and histidine 178 each contribute to the substrate site. Histidine 205 serves as a coordination point for Zn(2+). 2 residues coordinate substrate: glutamate 208 and aspartate 294. Residue aspartate 294 participates in Zn(2+) binding.

It belongs to the metallo-dependent hydrolases superfamily. MTA/SAH deaminase family. As to quaternary structure, homotetramer. Zn(2+) serves as cofactor.

It carries out the reaction 5'-deoxyadenosine + H2O + H(+) = 5'-deoxyinosine + NH4(+). The catalysed reaction is S-adenosyl-L-homocysteine + H2O + H(+) = S-inosyl-L-homocysteine + NH4(+). It catalyses the reaction S-methyl-5'-thioadenosine + H2O + H(+) = S-methyl-5'-thioinosine + NH4(+). The enzyme catalyses adenosine + H2O + H(+) = inosine + NH4(+). Its pathway is amino-acid biosynthesis; S-adenosyl-L-methionine biosynthesis. In terms of biological role, catalyzes the deamination of three SAM-derived enzymatic products, namely 5'-deoxyadenosine, S-adenosyl-L-homocysteine, and 5'-methylthioadenosine, to produce the inosine analogs. Can also deaminate adenosine. The preferred substrate for this enzyme is 5'-deoxyadenosine, but all these substrates are efficiently deaminated. Likely functions in a S-adenosyl-L-methionine (SAM) recycling pathway from S-adenosyl-L-homocysteine (SAH) produced from SAM-dependent methylation reactions. May also be involved in the recycling of 5'-deoxyadenosine, whereupon the 5'-deoxyribose moiety of 5'-deoxyinosine is further metabolized to deoxyhexoses used for the biosynthesis of aromatic amino acids in methanogens. The chain is 5'-deoxyadenosine deaminase from Methanococcus maripaludis (strain DSM 14266 / JCM 13030 / NBRC 101832 / S2 / LL).